Reading from the N-terminus, the 361-residue chain is FK506-binding protein 39 kDa (361 aa).

The interval 122–256 (LVDEEDEEEE…PSSPKTRTLK (135 aa)) is disordered. Acidic residues predominate over residues 123–174 (VDEEDEEEEESDEDYDLSPTEEDLVETVSGDEESEEESESEDNSASEEDELD). S192 carries the phosphoserine modification. Positions 208–227 (QKVEGTPVKEKKVAFAEKLE) are enriched in basic and acidic residues. T213 is modified (phosphothreonine). Positions 241 to 252 (QASSNAPSSPKT) are enriched in polar residues. S249 carries the post-translational modification Phosphoserine. The PPIase FKBP-type domain occupies 275-361 (GKKVEMRYIG…VFEVKLVRVH (87 aa)).

Belongs to the FKBP-type PPIase family. FKBP3/4 subfamily.

It is found in the nucleus. The protein localises to the nucleolus. It catalyses the reaction [protein]-peptidylproline (omega=180) = [protein]-peptidylproline (omega=0). PPIase that acts as a histone chaperone. Histone proline isomerase that increases the rate of cis-trans isomerization at prolines on the histone H3 N-terminal tail. Proline isomerization influences H3 methylation thereby regulating gene expression. The polypeptide is FK506-binding protein 39 kDa (Schizosaccharomyces pombe (strain 972 / ATCC 24843) (Fission yeast)).